A 239-amino-acid chain; its full sequence is Prolactin-8A4 (239 aa).

An N-terminal signal peptide occupies residues 1 to 31 (MMKLALSQPPFSGTLLMLVVSILLLWEKAAS). 2 disulfide bridges follow: Cys-35-Cys-42 and Cys-102-Cys-215. Residues Asn-211 and Asn-218 are each glycosylated (N-linked (GlcNAc...) asparagine). Cys-232 and Cys-239 are oxidised to a cystine.

This sequence belongs to the somatotropin/prolactin family. As to expression, placental basal zone cells.

The protein localises to the secreted. In Rattus norvegicus (Rat), this protein is Prolactin-8A4 (Prl8a4).